The chain runs to 134 residues: Rubredoxin-2 (134 aa).

The region spanning 1–53 (MAKYQCPDCQYIYDECKGEPHEGFQPNTNWGEIPEEWACPDCAVRDKIDFKML) is the Rubredoxin-like domain. The Fe cation site is built by Cys6, Cys9, Cys39, and Cys42. Over residues 99–116 (SITDERENTPDNKVERRS) the composition is skewed to basic and acidic residues. A disordered region spans residues 99 to 134 (SITDERENTPDNKVERRSQSQAVRRSSVKKIKNNKR). Basic residues predominate over residues 124–134 (SSVKKIKNNKR).

It belongs to the rubredoxin family. The cofactor is Fe(3+).

The protein localises to the cytoplasm. The protein operates within hydrocarbon metabolism; alkane degradation. Functionally, involved in the hydrocarbon hydroxylating system, which transfers electrons from NADH to rubredoxin reductase and then through rubredoxin to alkane 1 monooxygenase. In Pseudomonas putida (Arthrobacter siderocapsulatus), this protein is Rubredoxin-2 (alkF).